We begin with the raw amino-acid sequence, 181 residues long: Adenylate kinase (181 aa).

An ATP-binding site is contributed by 10–15; sequence GAGKGT. Residues 30-59 are NMP; the sequence is STGDLFRSNISEGTELGLQAKQYLDAGDLV. Residues Thr31, Arg36, 57–59, 85–88, and Gln92 contribute to the AMP site; these read DLV and GFPR. The LID stretch occupies residues 126-132; that stretch reads GRGRADD. Arg127 is an ATP binding site. AMP contacts are provided by Arg129 and Arg140. Gly166 serves as a coordination point for ATP.

It belongs to the adenylate kinase family. As to quaternary structure, monomer.

It is found in the cytoplasm. The enzyme catalyses AMP + ATP = 2 ADP. It functions in the pathway purine metabolism; AMP biosynthesis via salvage pathway; AMP from ADP: step 1/1. Its function is as follows. Catalyzes the reversible transfer of the terminal phosphate group between ATP and AMP. Plays an important role in cellular energy homeostasis and in adenine nucleotide metabolism. The polypeptide is Adenylate kinase (Mycobacteroides abscessus (strain ATCC 19977 / DSM 44196 / CCUG 20993 / CIP 104536 / JCM 13569 / NCTC 13031 / TMC 1543 / L948) (Mycobacterium abscessus)).